Consider the following 120-residue polypeptide: MVSSKDIIQRRARRVRRRIKMVSHDRPRLSVYRSNQNIYAQVIDDLRGCTLVSASTLESDLKKSLKSGADKEAAFAVGKLIAERAKKAGVNEVVFDRGAYVYHGRVKALAEAAREGGLSF.

It belongs to the universal ribosomal protein uL18 family. Part of the 50S ribosomal subunit; part of the 5S rRNA/L5/L18/L25 subcomplex. Contacts the 5S and 23S rRNAs.

Its function is as follows. This is one of the proteins that bind and probably mediate the attachment of the 5S RNA into the large ribosomal subunit, where it forms part of the central protuberance. This chain is Large ribosomal subunit protein uL18, found in Bartonella tribocorum (strain CIP 105476 / IBS 506).